We begin with the raw amino-acid sequence, 570 residues long: E3 ubiquitin-protein ligase ZFP91 (570 aa).

The span at 1–12 (MPGETEEPRPPE) shows a compositional bias: basic and acidic residues. The segment at 1–306 (MPGETEEPRP…PRLPKRRKKP (306 aa)) is disordered. Composition is skewed to low complexity over residues 31-43 (QRPP…APAG) and 59-68 (AAAAAAAAAV). The segment covering 69–82 (SRRRKAEYPRRRRS) has biased composition (basic residues). Phosphoserine is present on residues Ser-83 and Ser-103. Polar residues predominate over residues 94–104 (QQPQAAKSPSP). Basic and acidic residues predominate over residues 119-128 (VTTDKDPKEE). Positions 207–223 (SEEEEEEEEEMLISEEE) are enriched in acidic residues. Composition is skewed to basic and acidic residues over residues 224 to 245 (IPFK…ETPK) and 252 to 269 (KVKE…VEVE). Over residues 270–282 (VKEEENEIREDEE) the composition is skewed to acidic residues. 5 consecutive C2H2-type zinc fingers follow at residues 311-336 (VRCE…KYQH), 342-366 (YVCP…AKHH), 372-394 (YICE…RMIH), 400-422 (LQCE…MKKH), and 430-453 (FSCN…AKSH). The tract at residues 338 to 368 (LKKKYVCPHPSCGRLFRLQKQLLRHAKHHTD) is interaction with MAP3K14/NIK.

This sequence belongs to the krueppel C2H2-type zinc-finger protein family. In terms of assembly, interacts with MAP3K14/NIK. Expressed ubiquitously, particularly at high level in testis. Isoform 2 is testis specific.

Its subcellular location is the nucleus. It catalyses the reaction S-ubiquitinyl-[E2 ubiquitin-conjugating enzyme]-L-cysteine + [acceptor protein]-L-lysine = [E2 ubiquitin-conjugating enzyme]-L-cysteine + N(6)-ubiquitinyl-[acceptor protein]-L-lysine.. It participates in protein modification; protein ubiquitination. In terms of biological role, atypical E3 ubiquitin-protein ligase that mediates 'Lys-63'-linked ubiquitination of MAP3K14/NIK, leading to stabilize and activate MAP3K14/NIK. It thereby acts as an activator of the non-canonical NF-kappa-B2/NFKB2 pathway. May also play an important role in cell proliferation and/or anti-apoptosis. This is E3 ubiquitin-protein ligase ZFP91 (ZFP91) from Homo sapiens (Human).